Consider the following 186-residue polypeptide: Heat shock protein 23 (186 aa).

In terms of domain architecture, sHSP spans valine 53–glutamine 161. The segment at valine 163–lysine 186 is disordered. Basic and acidic residues predominate over residues asparagine 169–lysine 186.

Belongs to the small heat shock protein (HSP20) family.

The protein is Heat shock protein 23 (Hsp23) of Drosophila melanogaster (Fruit fly).